Reading from the N-terminus, the 517-residue chain is Recombining binding protein suppressor of hairless-like protein (517 aa).

Residues 26-37 (EMQLQSEADRRS) are compositionally biased toward basic and acidic residues. Residues 26–48 (EMQLQSEADRRSLPGTWTRSSPE) are disordered. DNA-binding stretches follow at residues 78–88 (QKSYGNEKRFF), 193–198 (SKPSQK), and 220–225 (RLRSQT). The 126-residue stretch at 387 to 512 (LISTLELSGG…HQEFTRTNFH (126 aa)) folds into the IPT/TIG domain.

This sequence belongs to the Su(H) family. As to quaternary structure, interacts weakly with EBNA2. Does not interact with any Notch proteins.

The protein resides in the nucleus. Its function is as follows. Putative transcription factor, which cooperates with EBNA2 to activate transcription. In Homo sapiens (Human), this protein is Recombining binding protein suppressor of hairless-like protein (RBPJL).